Here is a 517-residue protein sequence, read N- to C-terminus: Crotonobetaine/carnitine--CoA ligase (517 aa).

Belongs to the ATP-dependent AMP-binding enzyme family.

The enzyme catalyses 4-(trimethylamino)butanoate + ATP + CoA = 4-(trimethylamino)butanoyl-CoA + AMP + diphosphate. It carries out the reaction crotonobetaine + ATP + CoA = crotonobetainyl-CoA + AMP + diphosphate. It catalyses the reaction (R)-carnitine + ATP + CoA = (R)-carnitinyl-CoA + AMP + diphosphate. It participates in amine and polyamine metabolism; carnitine metabolism. In terms of biological role, catalyzes the transfer of CoA to carnitine, generating the initial carnitinyl-CoA needed for the CaiB reaction cycle. Also has activity toward crotonobetaine and gamma-butyrobetaine. The polypeptide is Crotonobetaine/carnitine--CoA ligase (Escherichia coli O8 (strain IAI1)).